A 133-amino-acid polypeptide reads, in one-letter code: MQKIDKTLEEWRAMLDPEQYQVCRLKGTERPFTGKYNSEKRAGTYHCICCDLPLFDSNTKFDSGCGWPSFYAPIEDSAMIETRDTSHGMIRTEVTCAQCDAHLGHVFPDGPPPTGLRYCINSVCLDFKPRDGA.

Residues 8–130 form the MsrB domain; it reads LEEWRAMLDP…NSVCLDFKPR (123 aa). The Zn(2+) site is built by Cys-47, Cys-50, Cys-96, and Cys-99. Cys-119 acts as the Nucleophile in catalysis.

This sequence belongs to the MsrB Met sulfoxide reductase family. Zn(2+) is required as a cofactor.

The enzyme catalyses L-methionyl-[protein] + [thioredoxin]-disulfide + H2O = L-methionyl-(R)-S-oxide-[protein] + [thioredoxin]-dithiol. The polypeptide is Peptide methionine sulfoxide reductase MsrB (Pseudomonas putida (strain W619)).